A 470-amino-acid chain; its full sequence is Cholesterol 7-desaturase nvd 1 (470 aa).

The chain crosses the membrane as a helical span at residues 67 to 87 (LALCIAGFSVLMYFLYVLVFV). One can recognise a Rieske domain in the interval 136–238 (FRLVDSQQLE…CREVNKAIFV (103 aa)). Residues Cys-176, His-178, Cys-196, and His-199 each contribute to the [2Fe-2S] cluster site.

Belongs to the cholesterol 7-desaturase family. [2Fe-2S] cluster is required as a cofactor.

The protein resides in the membrane. It catalyses the reaction cholesterol + NADPH + O2 + H(+) = 7-dehydrocholesterol + NADP(+) + 2 H2O. The catalysed reaction is cholesterol + NADH + O2 + H(+) = 7-dehydrocholesterol + NAD(+) + 2 H2O. It functions in the pathway steroid hormone biosynthesis; dafachronic acid biosynthesis. Its function is as follows. Catalyzes the production of 7-dehydrocholesterol (7-DHC or cholesta-5,7-dien-3beta-ol) by inserting a double bond (desaturating) at the C7-C8 single bond of cholesterol. Essential regulator of steroid biosynthesis as this reaction is the first step in the synthesis of the steroid hormone Delta(7)-dafachronic acid. The protein is Cholesterol 7-desaturase nvd 1 of Ciona intestinalis (Transparent sea squirt).